The chain runs to 759 residues: Protein MEI2-like 3 (759 aa).

2 consecutive RRM domains span residues 166–239 (RTLF…FSIP) and 251–324 (GTLV…HSRP).

In terms of biological role, probable RNA-binding protein that plays a role in meiosis and vegetative growth. This is Protein MEI2-like 3 (ML3) from Arabidopsis thaliana (Mouse-ear cress).